The primary structure comprises 561 residues: Putative transport protein YbjL (561 aa).

The next 5 helical transmembrane spans lie at 8–28, 32–52, 66–86, 94–114, and 158–178; these read LLNGNYILLLFVVLTLGLCLG, LGSIQLGNSIGVLVVSLLLGQ, FMLFIFCVGVEAGPNFFSIFF, MLALVMVGSALVIALGLGKLF, and NLSLGYALTYLIGLVSLIVGA. 2 RCK C-terminal domains span residues 200–288 and 292–373; these read RGLD…SFRN and VFDR…RIGF. 5 helical membrane passes run 383-403, 406-426, 451-471, 475-495, and 540-560; these read LLAFCAFFVIGLMIGMITFQF, FSFGMGNAAGLLFAGIMLGFM, VFMAGVGLSAGSGINNGLGAI, MLIAGLIVSLVPVVICFLFGA, and AIANVLLTLAGTIIVMVWPGL.

Belongs to the AAE transporter (TC 2.A.81) family. YbjL subfamily.

Its subcellular location is the cell membrane. This Shigella sonnei (strain Ss046) protein is Putative transport protein YbjL.